Here is a 98-residue protein sequence, read N- to C-terminus: MPSISTNIILAFITALLGMLIFRSHLMSSLLCLEGMMLSMFILSTLTILNLYFTTSFMMPILLLVFAACEAAVGLALLVTVSNTYGLDYIQNLNLLQC.

Helical transmembrane passes span 2 to 22 (PSIS…MLIF), 29 to 49 (SLLC…LTIL), and 61 to 81 (ILLL…LVTV).

The protein belongs to the complex I subunit 4L family. As to quaternary structure, core subunit of respiratory chain NADH dehydrogenase (Complex I) which is composed of 45 different subunits.

The protein resides in the mitochondrion inner membrane. It carries out the reaction a ubiquinone + NADH + 5 H(+)(in) = a ubiquinol + NAD(+) + 4 H(+)(out). Functionally, core subunit of the mitochondrial membrane respiratory chain NADH dehydrogenase (Complex I) which catalyzes electron transfer from NADH through the respiratory chain, using ubiquinone as an electron acceptor. Part of the enzyme membrane arm which is embedded in the lipid bilayer and involved in proton translocation. The protein is NADH-ubiquinone oxidoreductase chain 4L (MT-ND4L) of Eulemur coronatus (Crowned lemur).